The chain runs to 200 residues: A-type ATP synthase subunit E (200 aa).

This sequence belongs to the V-ATPase E subunit family. In terms of assembly, has multiple subunits with at least A(3), B(3), C, D, E, F, H, I and proteolipid K(x).

The protein resides in the cell membrane. Component of the A-type ATP synthase that produces ATP from ADP in the presence of a proton gradient across the membrane. This Aeropyrum pernix (strain ATCC 700893 / DSM 11879 / JCM 9820 / NBRC 100138 / K1) protein is A-type ATP synthase subunit E.